We begin with the raw amino-acid sequence, 241 residues long: Beta-casein (241 aa).

Residues 1–15 (MKILILACLVALALA) form the signal peptide. The interval 21–45 (LNVSSETVESLSSNEPDSSSEESIT) is disordered. Residue Ser24 is modified to Phosphoserine; in form 4-P, form 5-P, form 6-P and form 7-P. Ser25 is subject to Phosphoserine; in form 7-P. Thr27 is subject to Phosphothreonine; in form 6-P and form 7-P. 2 positions are modified to phosphoserine: Ser30 and Ser32. A Phosphoserine; in form 5-P, form 6-P and form 7-P modification is found at Ser33. Phosphoserine; in form 4-P, form 5-P, form 6-P and form 7-P is present on residues Ser38, Ser39, and Ser40. Asn150 is modified (deamidated asparagine).

It belongs to the beta-casein family. Post-translationally, there are at least five different forms found in milk, with varying degrees of phosphorylation. These include form 3-P which is phosphorylated at three sites that have not been determined, this form is present in very low amounts, form 4-P which is phosphorylated at four sites, form 5-P which is phosphorylated at five sites, form 6-P which is phosphorylated at six sites, and form 7-P which is phosphorylated at seven sites. Spontaneous deamidation of Asn-150 produces aspartate or isoaspartate. In terms of tissue distribution, mammary gland specific. Secreted in milk.

The protein resides in the secreted. Its function is as follows. Important role in determination of the surface properties of the casein micelles. The chain is Beta-casein from Equus caballus (Horse).